The sequence spans 511 residues: UDP-N-acetylmuramate--L-alanine ligase (511 aa).

Residue 127 to 133 participates in ATP binding; it reads GTHGKTT. The segment at 481–511 is disordered; the sequence is VGTVPGGEVGGATTIGGTVPGGSAPGASAAG. The span at 484–504 shows a compositional bias: gly residues; it reads VPGGEVGGATTIGGTVPGGSA.

It belongs to the MurCDEF family.

It is found in the cytoplasm. The enzyme catalyses UDP-N-acetyl-alpha-D-muramate + L-alanine + ATP = UDP-N-acetyl-alpha-D-muramoyl-L-alanine + ADP + phosphate + H(+). Its pathway is cell wall biogenesis; peptidoglycan biosynthesis. Functionally, cell wall formation. This chain is UDP-N-acetylmuramate--L-alanine ligase, found in Salinispora arenicola (strain CNS-205).